An 865-amino-acid chain; its full sequence is Alanine--tRNA ligase (865 aa).

Zn(2+) contacts are provided by His-556, His-560, Cys-660, and His-664.

Belongs to the class-II aminoacyl-tRNA synthetase family. Requires Zn(2+) as cofactor.

The protein localises to the cytoplasm. The catalysed reaction is tRNA(Ala) + L-alanine + ATP = L-alanyl-tRNA(Ala) + AMP + diphosphate. In terms of biological role, catalyzes the attachment of alanine to tRNA(Ala) in a two-step reaction: alanine is first activated by ATP to form Ala-AMP and then transferred to the acceptor end of tRNA(Ala). Also edits incorrectly charged Ser-tRNA(Ala) and Gly-tRNA(Ala) via its editing domain. This chain is Alanine--tRNA ligase, found in Ruthia magnifica subsp. Calyptogena magnifica.